Here is a 109-residue protein sequence, read N- to C-terminus: Small serum protein 2 (109 aa).

The N-terminal stretch at 1–19 (MRVFFSLIIFSFMLATCQG) is a signal peptide. 5 cysteine pairs are disulfide-bonded: C21/C72, C39/C64, C59/C93, C62/C71, and C84/C107.

Forms a stable, non-covalent complex with serotriflin.

The protein localises to the secreted. In terms of biological role, may serve as a self-defense protein against the toxic effects of the snake venom during accidental envenomation. Does not show inhibitory activity towards brevilysin H6. In Protobothrops flavoviridis (Habu), this protein is Small serum protein 2.